Reading from the N-terminus, the 414-residue chain is Cytochrome b (414 aa).

2 helical membrane passes run 40 to 60 and 84 to 104; these read FFGSLAILTLVIQIVTGVWLA and GWLIRYMHSTGASMFFIVIYL. Heme b is bound by residues H91 and H105. Transmembrane regions (helical) follow at residues 121-141, 154-174, 188-208, 252-272, 294-314, 317-337, 351-371, and 378-398; these read LLWMIGVVIYLVMMATAFFGY, QVIVNLFAAVPVVGEDLSVWV, FFAFHFLLPFLLAGLVFLHIV, LMGVVVFLAIFGYVMFFNPTM, IAPVWYFTPFYAMLRAVPPMY, QFPGVVVMFAAILILFVLPWL, IFKWATGIFVVSFVALAWLGI, and YTLLSQIFTVLYFAYFLLMPI. Heme b-binding residues include H192 and H206.

This sequence belongs to the cytochrome b family. The main subunits of complex b-c1 are: cytochrome b, cytochrome c1 and the Rieske protein. Heme b serves as cofactor.

It localises to the cell membrane. In terms of biological role, component of the ubiquinol-cytochrome c reductase complex (complex III or cytochrome b-c1 complex), which is a respiratory chain that generates an electrochemical potential coupled to ATP synthesis. The polypeptide is Cytochrome b (petB) (Allochromatium vinosum (strain ATCC 17899 / DSM 180 / NBRC 103801 / NCIMB 10441 / D) (Chromatium vinosum)).